We begin with the raw amino-acid sequence, 375 residues long: Alanine racemase (375 aa).

The Proton acceptor; specific for D-alanine role is filled by K35. K35 carries the N6-(pyridoxal phosphate)lysine modification. R133 contacts substrate. Y261 functions as the Proton acceptor; specific for L-alanine in the catalytic mechanism. M309 provides a ligand contact to substrate.

The protein belongs to the alanine racemase family. Requires pyridoxal 5'-phosphate as cofactor.

The enzyme catalyses L-alanine = D-alanine. The protein operates within amino-acid biosynthesis; D-alanine biosynthesis; D-alanine from L-alanine: step 1/1. In terms of biological role, catalyzes the interconversion of L-alanine and D-alanine. May also act on other amino acids. The sequence is that of Alanine racemase (alr) from Syntrophobacter fumaroxidans (strain DSM 10017 / MPOB).